The following is a 381-amino-acid chain: MMKKSLCCALLLTASFSTFAAAKTEQQIADIVNRTITPLMQEQAIPGMAVAVIYQGKPYYFTWGKADIANNHPVTQQTLFELGSVSKTFNGVLGGDAIARGEIKLSDPVTKYWPELTGKQWQGIRLLHLATYTAGGLPLQIPDDVRDKAALLHFYQNWQPQWTPGAKRLYANSSIGLFGALAVKPSGMSYEEAMTRRVLQPLKLAHTWITVPQNEQKDYARGYREGKPVHVSPGQLDAEAYGVKSSVIDMARWVQANMDASHVQEKTLQQGIALAQSRYWRIGDMYQGLGWEMLNWPLKADSIINGSDSKVALAALPAVEVNPPAPAVKASWVHKTGSTGGFGSYVAFVPEKNLGIVMLANKSYPNPVRVEAAWRILEKLQ.

The N-terminal stretch at 1–20 (MMKKSLCCALLLTASFSTFA) is a signal peptide. Serine 84 serves as the catalytic Acyl-ester intermediate. A beta-lactam is bound by residues serine 84, glutamine 140, tyrosine 170, and asparagine 172.

This sequence belongs to the class-C beta-lactamase family.

The catalysed reaction is a beta-lactam + H2O = a substituted beta-amino acid. Its function is as follows. Class C beta-lactamase which confers resistance to penicillins and cephalosporins. The sequence is that of Beta-lactamase CMY-4 from Klebsiella pneumoniae.